A 314-amino-acid polypeptide reads, in one-letter code: Polyamine aminopropyltransferase (314 aa).

One can recognise a PABS domain in the interval 4-241; that stretch reads GMYFFEHVTP…LNFGFLLASD (238 aa). Glutamine 33 provides a ligand contact to S-methyl-5'-thioadenosine. Histidine 64 and glutamate 88 together coordinate spermidine. S-methyl-5'-thioadenosine contacts are provided by residues aspartate 108 and 140–141; that span reads DA. The active-site Proton acceptor is aspartate 158. Proline 168 lines the S-methyl-5'-thioadenosine pocket.

It belongs to the spermidine/spermine synthase family. As to quaternary structure, homodimer or homotetramer.

Its subcellular location is the cytoplasm. The enzyme catalyses S-adenosyl 3-(methylsulfanyl)propylamine + putrescine = S-methyl-5'-thioadenosine + spermidine + H(+). It functions in the pathway amine and polyamine biosynthesis; spermidine biosynthesis; spermidine from putrescine: step 1/1. Functionally, catalyzes the irreversible transfer of a propylamine group from the amino donor S-adenosylmethioninamine (decarboxy-AdoMet) to putrescine (1,4-diaminobutane) to yield spermidine. This Thermus thermophilus (strain ATCC BAA-163 / DSM 7039 / HB27) protein is Polyamine aminopropyltransferase.